The following is a 473-amino-acid chain: Probable glycine dehydrogenase (decarboxylating) subunit 2 (473 aa).

Residue lysine 266 is modified to N6-(pyridoxal phosphate)lysine.

Belongs to the GcvP family. C-terminal subunit subfamily. The glycine cleavage system is composed of four proteins: P, T, L and H. In this organism, the P 'protein' is a heterodimer of two subunits. The cofactor is pyridoxal 5'-phosphate.

It carries out the reaction N(6)-[(R)-lipoyl]-L-lysyl-[glycine-cleavage complex H protein] + glycine + H(+) = N(6)-[(R)-S(8)-aminomethyldihydrolipoyl]-L-lysyl-[glycine-cleavage complex H protein] + CO2. The glycine cleavage system catalyzes the degradation of glycine. The P protein binds the alpha-amino group of glycine through its pyridoxal phosphate cofactor; CO(2) is released and the remaining methylamine moiety is then transferred to the lipoamide cofactor of the H protein. This Thermus thermophilus (strain ATCC BAA-163 / DSM 7039 / HB27) protein is Probable glycine dehydrogenase (decarboxylating) subunit 2.